The following is a 23-amino-acid chain: Conotoxin Cl6c (23 aa).

Disulfide bonds link C2/C12, C5/C17, and C11/C21.

In terms of tissue distribution, expressed by the venom duct.

It localises to the secreted. The protein is Conotoxin Cl6c of Californiconus californicus (California cone).